The primary structure comprises 567 residues: Urease subunit alpha (567 aa).

Residues 128–567 (GGIDAHVHFI…LPMSQRYFLF (440 aa)) enclose the Urease domain. Ni(2+) contacts are provided by histidine 133, histidine 135, and lysine 216. N6-carboxylysine is present on lysine 216. Substrate is bound at residue histidine 218. The Ni(2+) site is built by histidine 245 and histidine 271. The Proton donor role is filled by histidine 319. Aspartate 359 serves as a coordination point for Ni(2+).

Belongs to the metallo-dependent hydrolases superfamily. Urease alpha subunit family. As to quaternary structure, heterotrimer of UreA (gamma), UreB (beta) and UreC (alpha) subunits. Three heterotrimers associate to form the active enzyme. It depends on Ni cation as a cofactor. Carboxylation allows a single lysine to coordinate two nickel ions.

It is found in the cytoplasm. It catalyses the reaction urea + 2 H2O + H(+) = hydrogencarbonate + 2 NH4(+). It participates in nitrogen metabolism; urea degradation; CO(2) and NH(3) from urea (urease route): step 1/1. This is Urease subunit alpha from Blochmanniella pennsylvanica (strain BPEN).